A 581-amino-acid polypeptide reads, in one-letter code: Putative protein phosphatase 2C 22 (581 aa).

An N-terminal signal peptide occupies residues 1 to 21; sequence MVISVPLFSSVLLALVVAVPA. One can recognise a PPM-type phosphatase domain in the interval 102-478; it reads KYASSAMQGL…NNATAILVQF (377 aa). The Mn(2+) site is built by Asp138, Gly139, Asp373, and Asn469. Positions 538 to 563 are disordered; that stretch reads SDEVAGGAAVAEQHQHNPEGGGEQQL.

The protein belongs to the PP2C family. Mg(2+) serves as cofactor. Requires Mn(2+) as cofactor.

The enzyme catalyses O-phospho-L-seryl-[protein] + H2O = L-seryl-[protein] + phosphate. It catalyses the reaction O-phospho-L-threonyl-[protein] + H2O = L-threonyl-[protein] + phosphate. The chain is Putative protein phosphatase 2C 22 from Oryza sativa subsp. japonica (Rice).